A 286-amino-acid chain; its full sequence is Thymidylate synthase (286 aa).

Residues Arg21 and 136 to 137 contribute to the dUMP site; that span reads RR. The active-site Nucleophile is Cys156. DUMP is bound by residues 176–179, Asn187, and 217–219; these read RSVD and HIY. (6R)-5,10-methylene-5,6,7,8-tetrahydrofolate is bound at residue Asp179. Ala285 serves as a coordination point for (6R)-5,10-methylene-5,6,7,8-tetrahydrofolate.

Belongs to the thymidylate synthase family. In terms of assembly, homodimer.

It catalyses the reaction dUMP + (6R)-5,10-methylene-5,6,7,8-tetrahydrofolate = 7,8-dihydrofolate + dTMP. It functions in the pathway pyrimidine metabolism; dTTP biosynthesis. The protein is Thymidylate synthase (TD) of Enterobacteria phage T4 (Bacteriophage T4).